The primary structure comprises 38 residues: Allatostatin-C (38 aa).

The propeptide occupies 1-19; it reads MRRALDGPGSSSLDTRQAD. Position 22 is a pyrrolidone carboxylic acid; partial (Q22).

The protein belongs to the allatostatin family. In its non-pyroglutamate form, expressed in antennal lobe (AL), corpora cardiaca (CC), corpora allata (CA) and gnathal ganglion (GNG) with expression in AL detected in most animals and expression in CC, CA and GNG detected in few animals (at protein level). In its pyroglutamate form, expressed in antennal lobe (AL), corpora cardiaca (CC) and corpora allata (CA) with expression detected in few animals (at protein level). Not expressed in GNG (protein level).

Its subcellular location is the secreted. In terms of biological role, strongly inhibits juvenile hormone biosynthesis. The polypeptide is Allatostatin-C (Agrotis ipsilon (Black cutworm moth)).